We begin with the raw amino-acid sequence, 166 residues long: Putative membrane protein 164 (166 aa).

Over 1-4 (MYHP) the chain is Intravirion. A helical membrane pass occupies residues 5–25 (VVQVLIGLILVIILILGFYHL). Residues 26–166 (KKKSCKTDTD…TIMGIARNIL (141 aa)) are Virion surface-facing.

This sequence belongs to the asfivirus envelope protein p22 family.

It is found in the virion membrane. Its subcellular location is the host cell membrane. This is Putative membrane protein 164 from Ornithodoros (relapsing fever ticks).